Consider the following 369-residue polypeptide: GTPase Obg (369 aa).

In terms of domain architecture, Obg spans Met1–Leu159. The tract at residues Ile128–Glu148 is disordered. Residues Ala160–Ala333 form the OBG-type G domain. GTP contacts are provided by residues Gly166–Ser173, Phe191–His195, Asp213–Gly216, Asn283–Asp286, and Ser314–Leu316. Mg(2+)-binding residues include Ser173 and Thr193.

The protein belongs to the TRAFAC class OBG-HflX-like GTPase superfamily. OBG GTPase family. Monomer. The cofactor is Mg(2+).

It localises to the cytoplasm. In terms of biological role, an essential GTPase which binds GTP, GDP and possibly (p)ppGpp with moderate affinity, with high nucleotide exchange rates and a fairly low GTP hydrolysis rate. Plays a role in control of the cell cycle, stress response, ribosome biogenesis and in those bacteria that undergo differentiation, in morphogenesis control. The chain is GTPase Obg from Herminiimonas arsenicoxydans.